The sequence spans 357 residues: MFDQLESIVGRYEELGELLSDPEVVSDTKRFMELSREEADLRDKVATYNEYKKVLETISDSEEMLGEGGLDDEMKEMLKEELSSAKSQKEVLEEEIKILLLPKDPNDGKNIILEIRGAAGGDEAALFAGDLLNMYQHFSESQGWKFEIMEANITGIGGYKEVSALISGPSVYSKLKYESGAHRVQRVPVTETQGRVHTSTATVLVMPEVEEFEMTIEQKDLRVDIYHASGAGGQNVNKVATAVRMVHLPTGIKVEMQEERTQQKNRDKAIKLLNTKVFDYYQQIELDKQNTERKSTVGTGDRSERIRTYNFPQNRVTDHRIGLTLQKLDSILSGKMDEVIDALIVYDQTKKLEELNK.

The residue at position 234 (Gln-234) is an N5-methylglutamine.

Belongs to the prokaryotic/mitochondrial release factor family. Methylated by PrmC. Methylation increases the termination efficiency of RF1.

It localises to the cytoplasm. Its function is as follows. Peptide chain release factor 1 directs the termination of translation in response to the peptide chain termination codons UAG and UAA. In Lactococcus lactis subsp. cremoris (strain MG1363), this protein is Peptide chain release factor 1.